The sequence spans 1408 residues: DNA-directed RNA polymerase subunit beta' (1408 aa).

Zn(2+) contacts are provided by cysteine 70, cysteine 72, cysteine 85, and cysteine 88. Mg(2+) contacts are provided by aspartate 460, aspartate 462, and aspartate 464. 4 residues coordinate Zn(2+): cysteine 822, cysteine 896, cysteine 903, and cysteine 906. Positions 1386-1408 are disordered; that stretch reads DTGEAPPLSEEETGEIRNSGYAV.

It belongs to the RNA polymerase beta' chain family. In terms of assembly, the RNAP catalytic core consists of 2 alpha, 1 beta, 1 beta' and 1 omega subunit. When a sigma factor is associated with the core the holoenzyme is formed, which can initiate transcription. Mg(2+) serves as cofactor. Zn(2+) is required as a cofactor.

It carries out the reaction RNA(n) + a ribonucleoside 5'-triphosphate = RNA(n+1) + diphosphate. DNA-dependent RNA polymerase catalyzes the transcription of DNA into RNA using the four ribonucleoside triphosphates as substrates. The sequence is that of DNA-directed RNA polymerase subunit beta' from Nitrosospira multiformis (strain ATCC 25196 / NCIMB 11849 / C 71).